A 200-amino-acid polypeptide reads, in one-letter code: MSMRTARLERSTSESSVLVEVNLDGTGKSEIETTVPFYNHMLTALSKHSLIDLRVKASGDTDIDVHHTVEDVAITLGEVLRTALGDKAGIRRFGEATIPLDEALAHAVVDVSGRPYLVHSGEPAGQEYHLIGGHFTGSLTRHVFEAITLHAQICLHMRVLAGRDPHHIVEAQFKAFARALRSAVESDPRVDGIPSTKGLL.

This sequence belongs to the imidazoleglycerol-phosphate dehydratase family.

The protein localises to the cytoplasm. The catalysed reaction is D-erythro-1-(imidazol-4-yl)glycerol 3-phosphate = 3-(imidazol-4-yl)-2-oxopropyl phosphate + H2O. It participates in amino-acid biosynthesis; L-histidine biosynthesis; L-histidine from 5-phospho-alpha-D-ribose 1-diphosphate: step 6/9. This chain is Imidazoleglycerol-phosphate dehydratase, found in Renibacterium salmoninarum (strain ATCC 33209 / DSM 20767 / JCM 11484 / NBRC 15589 / NCIMB 2235).